The primary structure comprises 256 residues: Thiazole synthase (256 aa).

Lys-95 functions as the Schiff-base intermediate with DXP in the catalytic mechanism. Residues Gly-156, 182–183 (AG), and 204–205 (NT) each bind 1-deoxy-D-xylulose 5-phosphate.

It belongs to the ThiG family. As to quaternary structure, homotetramer. Forms heterodimers with either ThiH or ThiS.

The protein localises to the cytoplasm. It catalyses the reaction [ThiS sulfur-carrier protein]-C-terminal-Gly-aminoethanethioate + 2-iminoacetate + 1-deoxy-D-xylulose 5-phosphate = [ThiS sulfur-carrier protein]-C-terminal Gly-Gly + 2-[(2R,5Z)-2-carboxy-4-methylthiazol-5(2H)-ylidene]ethyl phosphate + 2 H2O + H(+). It participates in cofactor biosynthesis; thiamine diphosphate biosynthesis. Functionally, catalyzes the rearrangement of 1-deoxy-D-xylulose 5-phosphate (DXP) to produce the thiazole phosphate moiety of thiamine. Sulfur is provided by the thiocarboxylate moiety of the carrier protein ThiS. In vitro, sulfur can be provided by H(2)S. The chain is Thiazole synthase from Escherichia coli (strain 55989 / EAEC).